The following is a 160-amino-acid chain: Transcriptional regulator MraZ (160 aa).

SpoVT-AbrB domains lie at 5 to 50 (KFET…EGVY) and 93 to 136 (AIEC…SQAE).

The protein belongs to the MraZ family. In terms of assembly, forms oligomers.

The protein localises to the cytoplasm. It localises to the nucleoid. The polypeptide is Transcriptional regulator MraZ (Geotalea uraniireducens (strain Rf4) (Geobacter uraniireducens)).